A 60-amino-acid polypeptide reads, in one-letter code: Cytotoxin 5 (60 aa).

Intrachain disulfides connect C3/C21, C14/C38, C42/C53, and C54/C59.

It belongs to the three-finger toxin family. Short-chain subfamily. Type IA cytotoxin sub-subfamily. As to quaternary structure, monomer in solution; Homodimer and oligomer in the presence of negatively charged lipids forming a pore with a size ranging between 20 and 30 Angstroms. As to expression, expressed by the venom gland.

It is found in the secreted. The protein resides in the target cell membrane. Its function is as follows. Shows cytolytic activity on many different cells by forming pore in lipid membranes. In vivo, increases heart rate or kills the animal by cardiac arrest. In addition, it binds to heparin with high affinity, interacts with Kv channel-interacting protein 1 (KCNIP1) in a calcium-independent manner, and binds to integrin alpha-V/beta-3 (ITGAV/ITGB3) with moderate affinity. The sequence is that of Cytotoxin 5 from Naja annulifera (Banded Egyptian cobra).